We begin with the raw amino-acid sequence, 858 residues long: Zinc finger protein ZXDC (858 aa).

2 disordered regions span residues 1 to 127 (MDLP…APAG) and 151 to 174 (PGPATAGAAAPRRAPQASGPSTPG). 3 stretches are compositionally biased toward low complexity: residues 23-35 (PLRRAPAPLGASP), 84-97 (GGAAAEAAGSQEAE), and 151-171 (PGPATAGAAAPRRAPQASGPS). Serine 34 bears the Phosphoserine mark. Position 172 is a phosphothreonine (threonine 172). 10 C2H2-type zinc fingers span residues 175–199 (YRCPEPQCALAFAKKHQLKVHLLTH), 208–232 (FKCPLEGCGWAFTTSYKLKRHLQSH), 238–262 (FGCPVGGCGKKFTTVYNLKAHMKGH), 268–290 (FKCEVCAERFPTHAKLSSHQRSH), 297–321 (YKCDFPGCEKTFITVSALFSHNRAH), 328–352 (FSCSFPGCSKQYDKACRLKIHLRSH), 358–382 (FICDSDSCGWTFTSMSKLLRHRRKH), 388–412 (FTCPVEGCGKSFTRAEHLKGHSITH), 418–442 (FECPVEGCCARFSARSSLYIHSKKH), and 451–476 (SRCPVSTCNRLFTSKHSMKAHMVRQH). Positions 579-688 (DSPLVLGTAA…HGLPQSTLPS (110 aa)) are required for transcriptional activation. Residue lysine 660 forms a Glycyl lysine isopeptide (Lys-Gly) (interchain with G-Cter in SUMO) linkage. 3 disordered regions span residues 660–696 (KVEPDSPSRPGAVGQQEGSHGLPQSTLPSPAEQHGAQ), 726–756 (KEKKQRGAGSNAGASQSTQRKIKEGKMSPPH), and 837–858 (GGPAGPEATQFPGSTINLQDLQ). Phosphoserine is present on serine 665. A compositionally biased stretch (polar residues) spans 675 to 687 (QEGSHGLPQSTLP). Positions 781–858 (PAAGVQCGAQ…GSTINLQDLQ (78 aa)) are interaction with CIITA. The segment covering 847–858 (FPGSTINLQDLQ) has biased composition (polar residues).

Belongs to the ZXD family. As to quaternary structure, self-associates. Interacts with ZXDA and CIITA. Sumoylated at Lys-660 with SUMO1, SUMO2 and SUMO3; sumoylation enhances the activity of the transcriptional activation domain. Expressed at high levels in heart, kidney, liver and testis, at moderate levels in brain and stomach, and at low levels in lung, muscle, placenta, small intestine and spleen.

It is found in the nucleus. Its function is as follows. Cooperates with CIITA to promote transcription of MHC class I and MHC class II genes. The polypeptide is Zinc finger protein ZXDC (ZXDC) (Homo sapiens (Human)).